Here is a 156-residue protein sequence, read N- to C-terminus: Peptidyl-prolyl cis-trans isomerase H (156 aa).

One can recognise a PPIase cyclophilin-type domain in the interval 1–155 (TPAGRLKCEL…MAVRITQCGE (155 aa)).

This sequence belongs to the cyclophilin-type PPIase family. PPIase H subfamily.

The protein localises to the nucleus. It carries out the reaction [protein]-peptidylproline (omega=180) = [protein]-peptidylproline (omega=0). In terms of biological role, PPIases accelerate the folding of proteins. It catalyzes the cis-trans isomerization of proline imidic peptide bonds in oligopeptides. The polypeptide is Peptidyl-prolyl cis-trans isomerase H (CYP3) (Mycosarcoma maydis (Corn smut fungus)).